Here is a 43-residue protein sequence, read N- to C-terminus: Potassium channel toxin gamma-KTx 3.2 (43 aa).

4 disulfides stabilise this stretch: cysteine 5–cysteine 23, cysteine 11–cysteine 34, cysteine 20–cysteine 39, and cysteine 24–cysteine 41.

Belongs to the ergtoxin family. Gamma-KTx 3 subfamily. As to expression, expressed by the venom gland.

It localises to the secreted. Blocks Kv11/ERG potassium channels. In Centruroides elegans (Bark scorpion), this protein is Potassium channel toxin gamma-KTx 3.2.